The primary structure comprises 196 residues: Probable malonic semialdehyde reductase RutE (196 aa).

Belongs to the nitroreductase family. HadB/RutE subfamily. FMN serves as cofactor.

The enzyme catalyses 3-hydroxypropanoate + NADP(+) = 3-oxopropanoate + NADPH + H(+). Functionally, may reduce toxic product malonic semialdehyde to 3-hydroxypropionic acid, which is excreted. The polypeptide is Probable malonic semialdehyde reductase RutE (Escherichia coli O6:H1 (strain CFT073 / ATCC 700928 / UPEC)).